The following is a 277-amino-acid chain: Glutamate racemase (277 aa).

Substrate contacts are provided by residues 16–17 (DS) and 48–49 (YG). C79 (proton donor/acceptor) is an active-site residue. 80–81 (NT) contacts substrate. The Proton donor/acceptor role is filled by C191. Residue 192–193 (TH) participates in substrate binding.

This sequence belongs to the aspartate/glutamate racemases family.

It carries out the reaction L-glutamate = D-glutamate. It functions in the pathway cell wall biogenesis; peptidoglycan biosynthesis. Its function is as follows. Provides the (R)-glutamate required for cell wall biosynthesis. The protein is Glutamate racemase of Symbiobacterium thermophilum (strain DSM 24528 / JCM 14929 / IAM 14863 / T).